The sequence spans 762 residues: MENLKSASPEEDSPRHGDNMGKPKRIPRACDMCRKRKIRCDGKQPACSNCVSHGIPCVFTARPKRRTGQRQMYIKSLVSRLEQMESTLRSVIPNYDQQPDIIHPSSTPKNYHDLNCTKGETSSDDSTDDIAFLNEKMGTLVTTPIGSQKYFGSSSTFSIIQHAAKFASGVESDKVLEHLSMAKSGCLFDPDESFDGSKAELPSSEIANIYIDAYFKSYNPLFPVFTRENFYQKFGSPNCFKKPDGSIDLVNYASYVVVLSLGCLAIADTEEQVSRANALFKNTLGISIEVTKDMSFRTLVFNFLTSVYYCAVSKPNAVWLNVGVVVRVAQTLGLHRNSAMWSIGKEDAEEKARLFWYIYYLDRVSSMMTGKPVAFQDDDIDQMVPFYSIYCYYGLKPPEGDPLGTFNFLEAEVQLTRIVGQVLKELYSVSGMKSNSSQVMEKILEFDLLLNNWYNSLPDCMQPRNRFKIPKFCSSNLILTSAIYYSCLILIHRHSLTKNLQVNCVHRGTGSITDSQALCIAAARSITNLFVESVDLQPLIMKIIMYHAFTSSIIIFISILKRPLASICSEDLNCLISVKNRLISFETHGFVRLNVVMDALESMISTAQAAMQKAKQIAINFSSNLATNEDVTNSGMPDIADVSLKSQSHVPPRISSNHSDTSVKSNSPSSIFDNSGYLNSLNNSILQMHQNLQNSSNTNDQYKFDSVQENELHANITPVLDQTMSMFPFKDQLDLNFAAANVYNPNVFDDMGLDCSFYGNGL.

Residues 1–26 (MENLKSASPEEDSPRHGDNMGKPKRI) are disordered. Residues 12–21 (DSPRHGDNMG) are compositionally biased toward basic and acidic residues. The zn(2)-C6 fungal-type DNA-binding region spans 30 to 57 (CDMCRKRKIRCDGKQPACSNCVSHGIPC). A disordered region spans residues 647-668 (QSHVPPRISSNHSDTSVKSNSP).

The protein resides in the nucleus. This is an uncharacterized protein from Schizosaccharomyces pombe (strain 972 / ATCC 24843) (Fission yeast).